The sequence spans 209 residues: COP9 signalosome complex subunit 8 (209 aa).

The PCI domain occupies 8-179 (ESAFSFKKLL…GALDVSFNKF (172 aa)). A Phosphoserine modification is found at Ser-175.

The protein belongs to the CSN8 family. As to quaternary structure, component of the CSN complex, composed of COPS1/GPS1, COPS2, COPS3, COPS4, COPS5, COPS6, COPS7 (COPS7A or COPS7B), COPS8 and COPS9. In the complex, it probably interacts directly with COPS3, COPS4 and COPS7 (COPS7A or COPS7B).

The protein resides in the cytoplasm. Its subcellular location is the nucleus. Its function is as follows. Component of the COP9 signalosome complex (CSN), a complex involved in various cellular and developmental processes. The CSN complex is an essential regulator of the ubiquitin (Ubl) conjugation pathway by mediating the deneddylation of the cullin subunits of SCF-type E3 ligase complexes, leading to decrease the Ubl ligase activity of SCF-type complexes such as SCF, CSA or DDB2. The complex is also involved in phosphorylation of p53/TP53, c-jun/JUN, IkappaBalpha/NFKBIA, ITPK1 and IRF8/ICSBP, possibly via its association with CK2 and PKD kinases. CSN-dependent phosphorylation of TP53 and JUN promotes and protects degradation by the Ubl system, respectively. The sequence is that of COP9 signalosome complex subunit 8 (COPS8) from Pongo abelii (Sumatran orangutan).